Reading from the N-terminus, the 546-residue chain is CTP synthase (546 aa).

Positions 1-266 are amidoligase domain; that stretch reads MTTNYIFVTG…DDLVCQRFGI (266 aa). CTP is bound at residue serine 14. Serine 14 provides a ligand contact to UTP. Residues 15–20 and aspartate 72 contribute to the ATP site; that span reads SLGKGI. Residues aspartate 72 and glutamate 140 each coordinate Mg(2+). Residues 147–149, 187–192, and lysine 223 contribute to the CTP site; these read DIE and KTKPTQ. Residues 187 to 192 and lysine 223 contribute to the UTP site; that span reads KTKPTQ. Residue 239 to 241 coordinates ATP; sequence KDV. In terms of domain architecture, Glutamine amidotransferase type-1 spans 291–542; it reads TIGMVGKYIE…VKAAGENARG (252 aa). Glycine 352 contributes to the L-glutamine binding site. Cysteine 379 serves as the catalytic Nucleophile; for glutamine hydrolysis. Residues 380–383, glutamate 403, and arginine 470 each bind L-glutamine; that span reads LGMQ. Catalysis depends on residues histidine 515 and glutamate 517.

This sequence belongs to the CTP synthase family. As to quaternary structure, homotetramer.

The catalysed reaction is UTP + L-glutamine + ATP + H2O = CTP + L-glutamate + ADP + phosphate + 2 H(+). The enzyme catalyses L-glutamine + H2O = L-glutamate + NH4(+). It catalyses the reaction UTP + NH4(+) + ATP = CTP + ADP + phosphate + 2 H(+). It participates in pyrimidine metabolism; CTP biosynthesis via de novo pathway; CTP from UDP: step 2/2. Allosterically activated by GTP, when glutamine is the substrate; GTP has no effect on the reaction when ammonia is the substrate. The allosteric effector GTP functions by stabilizing the protein conformation that binds the tetrahedral intermediate(s) formed during glutamine hydrolysis. Inhibited by the product CTP, via allosteric rather than competitive inhibition. In terms of biological role, catalyzes the ATP-dependent amination of UTP to CTP with either L-glutamine or ammonia as the source of nitrogen. Regulates intracellular CTP levels through interactions with the four ribonucleotide triphosphates. The chain is CTP synthase from Aliivibrio salmonicida (strain LFI1238) (Vibrio salmonicida (strain LFI1238)).